A 662-amino-acid chain; its full sequence is Junctophilin-1 (662 aa).

Topologically, residues 1-640 are cytoplasmic; it reads MTGGRFDFDD…EREANSGPNS (640 aa). MORN repeat units lie at residues 14 to 36, 38 to 59, 60 to 82, 106 to 128, and 129 to 151; these read YCGG…KGQG, YSGS…SGNT, YQGY…KWMY, YEGT…DGGT, and YQGQ…PYGM. 3 positions are modified to phosphoserine: Ser157, Ser216, and Ser220. The disordered stretch occupies residues 228 to 247; the sequence is SKSSISSKRSSVRSDAAMSR. 2 MORN repeats span residues 281–303 and 304–326; these read YMGE…NGMK and YEGE…DGSK. Over residues 432–443 the composition is skewed to basic and acidic residues; the sequence is VDAKENPEEKVP. A disordered region spans residues 432-634; sequence VDAKENPEEK…DSCPSMEREA (203 aa). Residue Thr448 is modified to Phosphothreonine. A Phosphoserine modification is found at Ser452. Thr461 is subject to Phosphothreonine. Phosphoserine occurs at positions 465, 469, and 475. Over residues 584 to 599 the composition is skewed to low complexity; the sequence is KPSPNKWSPPKSVTKP. Basic and acidic residues predominate over residues 600–614; the sequence is VAKESKAEPKAKKSE. Residues 641-661 traverse the membrane as a helical; Anchor for type IV membrane protein segment; it reads VMIVLVMLLNIGLAILFVHFL.

The protein belongs to the junctophilin family.

Its subcellular location is the cell membrane. It is found in the endoplasmic reticulum membrane. It localises to the sarcoplasmic reticulum membrane. Junctophilins contribute to the formation of junctional membrane complexes (JMCs) which link the plasma membrane with the endoplasmic or sarcoplasmic reticulum in excitable cells. Provides a structural foundation for functional cross-talk between the cell surface and intracellular calcium release channels. JPH1 contributes to the construction of the skeletal muscle triad by linking the t-tubule (transverse-tubule) and SR (sarcoplasmic reticulum) membranes. The chain is Junctophilin-1 (JPH1) from Oryctolagus cuniculus (Rabbit).